The primary structure comprises 252 residues: F-box protein At5g39250 (252 aa).

The F-box domain occupies 1 to 42 (MFSEEVLKNVFPLLEGEDLASCMGVCKQWRDIARDDFYWKCQ).

This is F-box protein At5g39250 from Arabidopsis thaliana (Mouse-ear cress).